A 311-amino-acid chain; its full sequence is Heme A synthase (311 aa).

The Cytoplasmic segment spans residues 1-6 (MQRFIK). Residues 7–27 (WLAVITSLDLLIVLLGGALVT) traverse the membrane as a helical segment. Topologically, residues 28 to 62 (KTGSGQGCGKSWPLCNGEFVPSNLSMETIIELSHR) are extracellular. Cys-35 and Cys-42 are joined by a disulfide. Glu-58 is a catalytic residue. Heme o is bound at residue His-61. A helical membrane pass occupies residues 63–83 (LTSGSAGILVTLLCILSWKYY). Topologically, residues 84 to 91 (KHVRETKT) are cytoplasmic. A helical membrane pass occupies residues 92 to 112 (LAILSFVFLVAQALMGAAAVV). The Extracellular portion of the chain corresponds to 113–121 (WGQMPAVLA). Residues 122–142 (IHFGISLISFASVILLTCLIF) traverse the membrane as a helical segment. Residue His-123 participates in heme o binding. Residues 143–159 (EIDQKFDARSLIMDKKM) are Cytoplasmic-facing. The helical transmembrane segment at 160–180 (KFHIYGVTIYSYIVVYTGALV) threads the bilayer. At 181-211 (RHERASLACPDFPLCSKNRPMPTQLHEWVQM) the chain is on the extracellular side. A disulfide bridge links Cys-189 with Cys-195. The helical transmembrane segment at 212–232 (GHRVAAMLIFAWILYAMILAI) threads the bilayer. His-213 contacts heme b. Residues 233–243 (RHYKQQPVVYW) are Cytoplasmic-facing. Residues 244–264 (GWIISFILVTLQAVVGVLVVF) form a helical membrane-spanning segment. Over 265–271 (TNASLAM) the chain is Extracellular. The helical transmembrane segment at 272-292 (ALLHSLFISCLFAVLCYLVML) threads the bilayer. His-275 contacts heme b. Over 293–311 (GTRIKVNAKEAGSTSKQTK) the chain is Cytoplasmic.

It belongs to the COX15/CtaA family. Type 1 subfamily. Interacts with CtaB. It depends on heme b as a cofactor.

It is found in the cell membrane. It catalyses the reaction Fe(II)-heme o + 2 A + H2O = Fe(II)-heme a + 2 AH2. Its pathway is porphyrin-containing compound metabolism; heme A biosynthesis; heme A from heme O: step 1/1. Its function is as follows. Catalyzes the conversion of heme O to heme A by two successive hydroxylations of the methyl group at C8. The first hydroxylation forms heme I, the second hydroxylation results in an unstable dihydroxymethyl group, which spontaneously dehydrates, resulting in the formyl group of heme A. The chain is Heme A synthase from Bacillus cereus (strain G9842).